The sequence spans 673 residues: DNA ligase (673 aa).

Residues 33 to 37, 82 to 83, and Glu-115 each bind NAD(+); these read DAEYD and SL. Lys-117 functions as the N6-AMP-lysine intermediate in the catalytic mechanism. The NAD(+) site is built by Arg-138, Glu-175, Lys-292, and Lys-316. Positions 410, 413, 428, and 434 each coordinate Zn(2+). In terms of domain architecture, BRCT spans 593 to 673; that stretch reads VGDNPFKEKT…TFLAWSKPYL (81 aa).

This sequence belongs to the NAD-dependent DNA ligase family. LigA subfamily. It depends on Mg(2+) as a cofactor. Mn(2+) serves as cofactor.

The enzyme catalyses NAD(+) + (deoxyribonucleotide)n-3'-hydroxyl + 5'-phospho-(deoxyribonucleotide)m = (deoxyribonucleotide)n+m + AMP + beta-nicotinamide D-nucleotide.. In terms of biological role, DNA ligase that catalyzes the formation of phosphodiester linkages between 5'-phosphoryl and 3'-hydroxyl groups in double-stranded DNA using NAD as a coenzyme and as the energy source for the reaction. It is essential for DNA replication and repair of damaged DNA. The chain is DNA ligase from Pasteurella multocida (strain Pm70).